Here is a 304-residue protein sequence, read N- to C-terminus: Type II restriction enzyme LlaDCHI (304 aa).

The protein belongs to the DpnII type II restriction endonuclease family.

It catalyses the reaction Endonucleolytic cleavage of DNA to give specific double-stranded fragments with terminal 5'-phosphates.. Its function is as follows. A P subtype restriction enzyme that recognizes the double-stranded unmethylated sequence 5'-GATC-3' and cleaves before G-1. This Lactococcus lactis subsp. cremoris (Streptococcus cremoris) protein is Type II restriction enzyme LlaDCHI (llaDCHIR).